We begin with the raw amino-acid sequence, 267 residues long: Beta-lactamase OXA-5 (267 aa).

The signal sequence occupies residues 1-19 (MKTIAAYLVLVFYASTALS). S67 serves as the catalytic Acyl-ester intermediate. K70 is modified (N6-carboxylysine). Position 205–207 (205–207 (KTG)) interacts with substrate.

This sequence belongs to the class-D beta-lactamase family.

It catalyses the reaction a beta-lactam + H2O = a substituted beta-amino acid. Inhibited by clavulanic acid. Functionally, hydrolyzes both oxacillin and methicillin. This is Beta-lactamase OXA-5 (bla) from Pseudomonas aeruginosa.